Consider the following 383-residue polypeptide: Acetylornithine deacetylase (383 aa).

His80 is a Zn(2+) binding site. The active site involves Asp82. Asp112 is a Zn(2+) binding site. Glu144 is an active-site residue. Positions 145, 169, and 355 each coordinate Zn(2+).

The protein belongs to the peptidase M20A family. ArgE subfamily. As to quaternary structure, homodimer. Requires Zn(2+) as cofactor. Co(2+) is required as a cofactor. Glutathione serves as cofactor.

Its subcellular location is the cytoplasm. The catalysed reaction is N(2)-acetyl-L-ornithine + H2O = L-ornithine + acetate. Its pathway is amino-acid biosynthesis; L-arginine biosynthesis; L-ornithine from N(2)-acetyl-L-ornithine (linear): step 1/1. Its function is as follows. Catalyzes the hydrolysis of the amide bond of N(2)-acetylated L-amino acids. Cleaves the acetyl group from N-acetyl-L-ornithine to form L-ornithine, an intermediate in L-arginine biosynthesis pathway, and a branchpoint in the synthesis of polyamines. The protein is Acetylornithine deacetylase of Erwinia tasmaniensis (strain DSM 17950 / CFBP 7177 / CIP 109463 / NCPPB 4357 / Et1/99).